The sequence spans 117 residues: Large ribosomal subunit protein uL23 (117 aa).

Belongs to the universal ribosomal protein uL23 family. Part of the 50S ribosomal subunit. Contacts protein L29, and trigger factor when it is bound to the ribosome.

Its function is as follows. One of the early assembly proteins it binds 23S rRNA. One of the proteins that surrounds the polypeptide exit tunnel on the outside of the ribosome. Forms the main docking site for trigger factor binding to the ribosome. In Acetivibrio thermocellus (strain ATCC 27405 / DSM 1237 / JCM 9322 / NBRC 103400 / NCIMB 10682 / NRRL B-4536 / VPI 7372) (Clostridium thermocellum), this protein is Large ribosomal subunit protein uL23.